Consider the following 391-residue polypeptide: Chaperone protein DnaJ (391 aa).

Residues Cys-6–Gly-71 form the J domain. A CR-type zinc finger spans residues Gly-137 to Lys-215. Cys-150, Cys-153, Cys-167, Cys-170, Cys-189, Cys-192, Cys-203, and Cys-206 together coordinate Zn(2+). CXXCXGXG motif repeat units follow at residues Cys-150–Gly-157, Cys-167–Gly-174, Cys-189–Gly-196, and Cys-203–Gly-210. The interval Phe-372–Ser-391 is disordered.

This sequence belongs to the DnaJ family. Homodimer. Zn(2+) is required as a cofactor.

Its subcellular location is the cytoplasm. Functionally, participates actively in the response to hyperosmotic and heat shock by preventing the aggregation of stress-denatured proteins and by disaggregating proteins, also in an autonomous, DnaK-independent fashion. Unfolded proteins bind initially to DnaJ; upon interaction with the DnaJ-bound protein, DnaK hydrolyzes its bound ATP, resulting in the formation of a stable complex. GrpE releases ADP from DnaK; ATP binding to DnaK triggers the release of the substrate protein, thus completing the reaction cycle. Several rounds of ATP-dependent interactions between DnaJ, DnaK and GrpE are required for fully efficient folding. Also involved, together with DnaK and GrpE, in the DNA replication of plasmids through activation of initiation proteins. This Rhodopirellula baltica (strain DSM 10527 / NCIMB 13988 / SH1) protein is Chaperone protein DnaJ.